The chain runs to 149 residues: Ribonuclease H (149 aa).

The 143-residue stretch at 1 to 143 (MNQVVIYTDG…ADALANKGVD (143 aa)) folds into the RNase H type-1 domain. Mg(2+)-binding residues include aspartate 9, glutamate 47, aspartate 69, and aspartate 135.

It belongs to the RNase H family. Monomer. Mg(2+) is required as a cofactor.

It localises to the cytoplasm. It carries out the reaction Endonucleolytic cleavage to 5'-phosphomonoester.. In terms of biological role, endonuclease that specifically degrades the RNA of RNA-DNA hybrids. This chain is Ribonuclease H, found in Paracidovorax citrulli (strain AAC00-1) (Acidovorax citrulli).